We begin with the raw amino-acid sequence, 950 residues long: Glycine dehydrogenase (decarboxylating) (950 aa).

N6-(pyridoxal phosphate)lysine is present on Lys-699.

It belongs to the GcvP family. In terms of assembly, the glycine cleavage system is composed of four proteins: P, T, L and H. Pyridoxal 5'-phosphate serves as cofactor.

It carries out the reaction N(6)-[(R)-lipoyl]-L-lysyl-[glycine-cleavage complex H protein] + glycine + H(+) = N(6)-[(R)-S(8)-aminomethyldihydrolipoyl]-L-lysyl-[glycine-cleavage complex H protein] + CO2. The glycine cleavage system catalyzes the degradation of glycine. The P protein binds the alpha-amino group of glycine through its pyridoxal phosphate cofactor; CO(2) is released and the remaining methylamine moiety is then transferred to the lipoamide cofactor of the H protein. This chain is Glycine dehydrogenase (decarboxylating), found in Chromobacterium violaceum (strain ATCC 12472 / DSM 30191 / JCM 1249 / CCUG 213 / NBRC 12614 / NCIMB 9131 / NCTC 9757 / MK).